The following is a 130-amino-acid chain: Small ribosomal subunit protein bS6 (130 aa).

Residues serine 100–glutamate 130 are disordered. Residues lysine 104–alanine 116 are compositionally biased toward basic and acidic residues. Residues alanine 119–glutamate 130 are compositionally biased toward acidic residues.

Belongs to the bacterial ribosomal protein bS6 family.

Its function is as follows. Binds together with bS18 to 16S ribosomal RNA. The chain is Small ribosomal subunit protein bS6 from Yersinia pestis (strain Pestoides F).